Here is a 726-residue protein sequence, read N- to C-terminus: DNA ligase (726 aa).

NAD(+) contacts are provided by residues 34–38, 83–84, and Glu115; these read DAEYD and SL. The active-site N6-AMP-lysine intermediate is the Lys117. Arg138, Glu190, Lys306, and Lys330 together coordinate NAD(+). Zn(2+) is bound by residues Cys424, Cys427, Cys442, and Cys448. One can recognise a BRCT domain in the interval 608-698; that stretch reads SRGNALAGKT…RTADDQATPA (91 aa). The segment at 690–726 is disordered; the sequence is TADDQATPASDRRAATASVPPSDDAPGSPRQLDFDLT.

This sequence belongs to the NAD-dependent DNA ligase family. LigA subfamily. Mg(2+) serves as cofactor. The cofactor is Mn(2+).

The enzyme catalyses NAD(+) + (deoxyribonucleotide)n-3'-hydroxyl + 5'-phospho-(deoxyribonucleotide)m = (deoxyribonucleotide)n+m + AMP + beta-nicotinamide D-nucleotide.. In terms of biological role, DNA ligase that catalyzes the formation of phosphodiester linkages between 5'-phosphoryl and 3'-hydroxyl groups in double-stranded DNA using NAD as a coenzyme and as the energy source for the reaction. It is essential for DNA replication and repair of damaged DNA. In Roseiflexus sp. (strain RS-1), this protein is DNA ligase.